We begin with the raw amino-acid sequence, 555 residues long: Oligo-1,6-glucosidase (555 aa).

Asp-199 functions as the Nucleophile in the catalytic mechanism. The active-site Proton donor is the Glu-255.

This sequence belongs to the glycosyl hydrolase 13 family.

The protein localises to the cytoplasm. The catalysed reaction is Hydrolysis of (1-&gt;6)-alpha-D-glucosidic linkages in some oligosaccharides produced from starch and glycogen by alpha-amylase, and in isomaltose.. This chain is Oligo-1,6-glucosidase (malL), found in Heyndrickxia coagulans (Weizmannia coagulans).